Consider the following 228-residue polypeptide: Glucose-induced degradation protein 8-A homolog (228 aa).

The region spanning 25–57 (QRADMNRLIMNYLVTEGFKEAAEKFRMESGIEP) is the LisH domain. Residues 63–120 (SLDERIKIREMVLKGQIQEAIALINSLHPELLDTNRYLYFHLQQQHLIELIRLRETEA) enclose the CTLH domain.

The protein belongs to the GID8 family. As to quaternary structure, identified in the CTLH complex that contains at least MAEA, RMND5A (or alternatively its paralog RMND5B), GID8, WDR26, and RANBP9 and/or RANBP10. Interacts with CTNNB1.

Functionally, core component of the CTLH E3 ubiquitin-protein ligase complex that selectively accepts ubiquitin from UBE2H and mediates ubiquitination and subsequent proteasomal degradation of target proteins. Acts as a positive regulator of Wnt signaling pathway by promoting beta-catenin (CTNNB1) nuclear accumulation. Required for normal Wnt signaling and normal dorsoventral patterning during embryogenesis. The sequence is that of Glucose-induced degradation protein 8-A homolog (gid8a) from Danio rerio (Zebrafish).